The chain runs to 150 residues: Large ribosomal subunit protein bL9 (150 aa).

Belongs to the bacterial ribosomal protein bL9 family.

Its function is as follows. Binds to the 23S rRNA. The polypeptide is Large ribosomal subunit protein bL9 (Corynebacterium diphtheriae (strain ATCC 700971 / NCTC 13129 / Biotype gravis)).